The chain runs to 57 residues: uncharacterized protein (57 aa).

Residues 26 to 57 form a disordered region; the sequence is VVSTRKRLKQNTNTPPHYDTSEDEDEDNYYNY. Residues 46 to 57 are compositionally biased toward acidic residues; the sequence is SEDEDEDNYYNY.

This is an uncharacterized protein from Autographa californica nuclear polyhedrosis virus (AcMNPV).